The following is a 353-amino-acid chain: Glucose import ATP-binding protein GlcV (353 aa).

The 238-residue stretch at 4 to 241 (IIVKNVSKVF…PVSIQVASLI (238 aa)) folds into the ABC transporter domain. Residues 40–46 (SGAGKTT), Q89, and E166 each bind ATP.

This sequence belongs to the ABC transporter superfamily. In terms of assembly, the complex is composed of two ATP-binding proteins (GlcV), two transmembrane proteins (GlcT and GlcU) and a solute-binding protein (GlcS). Forms transient head-to-tail homodimers in the presence of ATP-Mg(2+).

Its subcellular location is the cell membrane. The enzyme catalyses D-glucose(out) + ATP + H2O = D-glucose(in) + ADP + phosphate + H(+). Functionally, part of the ABC transporter complex GlcSTUV involved in glucose uptake. Responsible for energy coupling to the transport system. In vitro, as a free subunit, exhibits a constitutive ATPase activity. The chain is Glucose import ATP-binding protein GlcV from Saccharolobus solfataricus (strain ATCC 35092 / DSM 1617 / JCM 11322 / P2) (Sulfolobus solfataricus).